Here is an 86-residue protein sequence, read N- to C-terminus: Large ribosomal subunit protein bL27 (86 aa).

The interval 1–23 (MAHKKGTGSTRNGRDSNSKRLGV) is disordered.

It belongs to the bacterial ribosomal protein bL27 family.

The chain is Large ribosomal subunit protein bL27 from Prochlorococcus marinus (strain MIT 9515).